The chain runs to 436 residues: 3-ketoacyl-CoA thiolase (436 aa).

Cys99 acts as the Acyl-thioester intermediate in catalysis. Active-site proton acceptor residues include His392 and Cys422.

It belongs to the thiolase-like superfamily. Thiolase family. Heterotetramer of two alpha chains (FadJ) and two beta chains (FadI).

It is found in the cytoplasm. It catalyses the reaction an acyl-CoA + acetyl-CoA = a 3-oxoacyl-CoA + CoA. It participates in lipid metabolism; fatty acid beta-oxidation. Catalyzes the final step of fatty acid oxidation in which acetyl-CoA is released and the CoA ester of a fatty acid two carbons shorter is formed. This Salmonella paratyphi A (strain ATCC 9150 / SARB42) protein is 3-ketoacyl-CoA thiolase.